A 615-amino-acid polypeptide reads, in one-letter code: 1-deoxy-D-xylulose-5-phosphate synthase (615 aa).

Thiamine diphosphate is bound by residues histidine 72 and glycine 111–serine 113. Aspartate 142 is a binding site for Mg(2+). Residues glycine 143–alanine 144, asparagine 171, tyrosine 278, and glutamate 360 each bind thiamine diphosphate. Position 171 (asparagine 171) interacts with Mg(2+).

It belongs to the transketolase family. DXPS subfamily. In terms of assembly, homodimer. Mg(2+) serves as cofactor. Thiamine diphosphate is required as a cofactor.

The enzyme catalyses D-glyceraldehyde 3-phosphate + pyruvate + H(+) = 1-deoxy-D-xylulose 5-phosphate + CO2. The protein operates within metabolic intermediate biosynthesis; 1-deoxy-D-xylulose 5-phosphate biosynthesis; 1-deoxy-D-xylulose 5-phosphate from D-glyceraldehyde 3-phosphate and pyruvate: step 1/1. In terms of biological role, catalyzes the acyloin condensation reaction between C atoms 2 and 3 of pyruvate and glyceraldehyde 3-phosphate to yield 1-deoxy-D-xylulose-5-phosphate (DXP). This is 1-deoxy-D-xylulose-5-phosphate synthase from Campylobacter jejuni (strain RM1221).